Here is a 94-residue protein sequence, read N- to C-terminus: Co-chaperonin GroES (94 aa).

The protein belongs to the GroES chaperonin family. Heptamer of 7 subunits arranged in a ring. Interacts with the chaperonin GroEL.

It is found in the cytoplasm. In terms of biological role, together with the chaperonin GroEL, plays an essential role in assisting protein folding. The GroEL-GroES system forms a nano-cage that allows encapsulation of the non-native substrate proteins and provides a physical environment optimized to promote and accelerate protein folding. GroES binds to the apical surface of the GroEL ring, thereby capping the opening of the GroEL channel. The sequence is that of Co-chaperonin GroES from Streptococcus pneumoniae (strain ATCC 700669 / Spain 23F-1).